Consider the following 205-residue polypeptide: Urease accessory protein UreG 1 (205 aa).

14 to 21 contacts GTP; that stretch reads GPVGSGKT.

Belongs to the SIMIBI class G3E GTPase family. UreG subfamily. In terms of assembly, homodimer. UreD, UreF and UreG form a complex that acts as a GTP-hydrolysis-dependent molecular chaperone, activating the urease apoprotein by helping to assemble the nickel containing metallocenter of UreC. The UreE protein probably delivers the nickel.

The protein resides in the cytoplasm. Facilitates the functional incorporation of the urease nickel metallocenter. This process requires GTP hydrolysis, probably effectuated by UreG. The chain is Urease accessory protein UreG 1 from Methylobacterium radiotolerans (strain ATCC 27329 / DSM 1819 / JCM 2831 / NBRC 15690 / NCIMB 10815 / 0-1).